The following is a 240-amino-acid chain: Uridylate kinase (240 aa).

13–16 is an ATP binding site; the sequence is KASG. Residues 21–26 form an involved in allosteric activation by GTP region; it reads GGQGFG. Gly-55 serves as a coordination point for UMP. Positions 56 and 60 each coordinate ATP. UMP is bound by residues Asp-75 and 136 to 143; that span reads TGNPFFTT. Residues Thr-163, Gln-164, Tyr-169, and Asp-172 each contribute to the ATP site.

The protein belongs to the UMP kinase family. In terms of assembly, homohexamer.

The protein resides in the cytoplasm. The enzyme catalyses UMP + ATP = UDP + ADP. The protein operates within pyrimidine metabolism; CTP biosynthesis via de novo pathway; UDP from UMP (UMPK route): step 1/1. With respect to regulation, allosterically activated by GTP. Inhibited by UTP. In terms of biological role, catalyzes the reversible phosphorylation of UMP to UDP. The protein is Uridylate kinase of Rhizobium johnstonii (strain DSM 114642 / LMG 32736 / 3841) (Rhizobium leguminosarum bv. viciae).